The following is a 312-amino-acid chain: Ribonuclease Z (312 aa).

Residues H62, H64, D66, H67, H144, D215, and H273 each coordinate Zn(2+). D66 acts as the Proton acceptor in catalysis.

This sequence belongs to the RNase Z family. In terms of assembly, homodimer. It depends on Zn(2+) as a cofactor.

The catalysed reaction is Endonucleolytic cleavage of RNA, removing extra 3' nucleotides from tRNA precursor, generating 3' termini of tRNAs. A 3'-hydroxy group is left at the tRNA terminus and a 5'-phosphoryl group is left at the trailer molecule.. In terms of biological role, zinc phosphodiesterase, which displays some tRNA 3'-processing endonuclease activity. Probably involved in tRNA maturation, by removing a 3'-trailer from precursor tRNA. This chain is Ribonuclease Z, found in Prochlorococcus marinus (strain MIT 9301).